Reading from the N-terminus, the 426-residue chain is 3-phosphoshikimate 1-carboxyvinyltransferase (426 aa).

Residues Lys22, Ser23, and Arg27 each coordinate 3-phosphoshikimate. Phosphoenolpyruvate is bound at residue Lys22. Phosphoenolpyruvate is bound by residues Gly96 and Arg124. Positions 170, 171, 172, 198, 314, 337, and 341 each coordinate 3-phosphoshikimate. Residue Gln172 coordinates phosphoenolpyruvate. Catalysis depends on Asp314, which acts as the Proton acceptor. Phosphoenolpyruvate is bound by residues Arg345, Arg387, and Lys412.

This sequence belongs to the EPSP synthase family. Monomer.

It is found in the cytoplasm. It carries out the reaction 3-phosphoshikimate + phosphoenolpyruvate = 5-O-(1-carboxyvinyl)-3-phosphoshikimate + phosphate. Its pathway is metabolic intermediate biosynthesis; chorismate biosynthesis; chorismate from D-erythrose 4-phosphate and phosphoenolpyruvate: step 6/7. Its function is as follows. Catalyzes the transfer of the enolpyruvyl moiety of phosphoenolpyruvate (PEP) to the 5-hydroxyl of shikimate-3-phosphate (S3P) to produce enolpyruvyl shikimate-3-phosphate and inorganic phosphate. The polypeptide is 3-phosphoshikimate 1-carboxyvinyltransferase (Shewanella sp. (strain MR-7)).